A 135-amino-acid polypeptide reads, in one-letter code: Protein NrdI (135 aa).

Belongs to the NrdI family.

Probably involved in ribonucleotide reductase function. The chain is Protein NrdI from Pectobacterium atrosepticum (strain SCRI 1043 / ATCC BAA-672) (Erwinia carotovora subsp. atroseptica).